We begin with the raw amino-acid sequence, 480 residues long: Flotillin-like protein 2 (480 aa).

A lipid anchor (S-palmitoyl cysteine) is attached at C37. Positions 237–257 (ENQREAEVAQANSELAKKKAA) form a coiled coil.

The protein belongs to the band 7/mec-2 family. Flotillin subfamily. May be palmitoylated. As to expression, expressed in flowers in green pods. Primarily expressed in vascular tissues. Upon induction of nodulation, expansion of expression in the root cortex in the region of elongating root hairs, which will eventually become colonized by bacteria. Expressed in the infection zone in nodules.

The protein resides in the cell membrane. It is found in the membrane. The protein localises to the caveola. In terms of biological role, may act as a scaffolding protein within caveolar membranes, functionally participating in formation of caveolae or caveolae-like vesicles. Required for early symbiotic events and nodules formation. In Medicago truncatula (Barrel medic), this protein is Flotillin-like protein 2 (FLOT2).